A 163-amino-acid polypeptide reads, in one-letter code: MSLLLLVVSALHILILILLFVATLDKSWWTLPGKESLNLWYDCTWNNDTKTWACSNVSENGWLKAVQVLMVLSLILCCLSFILFMFQLYTMRRGGLFYATGLCQLCTSVAVFTGALIYAIHAEEILEKHPRGGSFGYCFALAWVAFPLALVSGIIYIHLRKRE.

A helical transmembrane segment spans residues 4-24; that stretch reads LLLVVSALHILILILLFVATL. N47 and N56 each carry an N-linked (GlcNAc...) asparagine glycan. 3 helical membrane-spanning segments follow: residues 66–86, 100–120, and 139–159; these read VQVLMVLSLILCCLSFILFMF, TGLCQLCTSVAVFTGALIYAI, and FALAWVAFPLALVSGIIYIHL.

Belongs to the PMP-22/EMP/MP20 family.

It is found in the membrane. In terms of biological role, probably involved in cell proliferation and cell-cell interactions. The chain is Epithelial membrane protein 3 (EMP3) from Homo sapiens (Human).